The sequence spans 167 residues: Peptide deformylase (167 aa).

Residues Cys91 and His133 each coordinate Fe cation. Glu134 is a catalytic residue. Position 137 (His137) interacts with Fe cation.

Belongs to the polypeptide deformylase family. Fe(2+) is required as a cofactor.

It carries out the reaction N-terminal N-formyl-L-methionyl-[peptide] + H2O = N-terminal L-methionyl-[peptide] + formate. Removes the formyl group from the N-terminal Met of newly synthesized proteins. Requires at least a dipeptide for an efficient rate of reaction. N-terminal L-methionine is a prerequisite for activity but the enzyme has broad specificity at other positions. The polypeptide is Peptide deformylase (Neisseria meningitidis serogroup C (strain 053442)).